The sequence spans 138 residues: Large ribosomal subunit protein uL16 (138 aa).

A compositionally biased stretch (basic residues) spans 1-17 (MLIPRKVKHRKQHHPRQ). The tract at residues 1–24 (MLIPRKVKHRKQHHPRQRGIASGG) is disordered.

This sequence belongs to the universal ribosomal protein uL16 family. Part of the 50S ribosomal subunit.

Its function is as follows. Binds 23S rRNA and is also seen to make contacts with the A and possibly P site tRNAs. The protein is Large ribosomal subunit protein uL16 of Mycobacterium ulcerans (strain Agy99).